A 479-amino-acid chain; its full sequence is Trigger factor (479 aa).

One can recognise a PPIase FKBP-type domain in the interval 174 to 261; sequence GDIAVVSFSG…LKELKTRELP (88 aa). The tract at residues 438-479 is disordered; that stretch reads VLESEAKTSKPAAKSKGSKTKSTKTKTNKANTEKPASDKSKS. Residues 453–464 are compositionally biased toward basic residues; that stretch reads KGSKTKSTKTKT. Over residues 468–479 the composition is skewed to basic and acidic residues; sequence NTEKPASDKSKS.

The protein belongs to the FKBP-type PPIase family. Tig subfamily.

Its subcellular location is the cytoplasm. The enzyme catalyses [protein]-peptidylproline (omega=180) = [protein]-peptidylproline (omega=0). Involved in protein export. Acts as a chaperone by maintaining the newly synthesized protein in an open conformation. Functions as a peptidyl-prolyl cis-trans isomerase. This is Trigger factor from Prochlorococcus marinus (strain MIT 9313).